Here is a 254-residue protein sequence, read N- to C-terminus: MGRKVAVLWHASFSIGAGVLYFYFVLPRWPELMGDTGHSLGTGLRIATGALVGLAALPVVFTLLRTRKPELGTPQLALSMRIWSIMAHVLAGALIVGTAISEVWLSLDAAGQWLFGIYGAAAAIAVLGFFGFYLSFVAELPPPPPKPLKPKKPKQRRLRRKKTAKGDEAEPEAAEEAENTELAAQEDEEAVEAPPESIESPGGEPESATREAPAAETATAEEPRGGLRNRRPTGKTSHRRRRTRSGVQVAKVDE.

4 helical membrane-spanning segments follow: residues 5–25 (VAVLWHASFSIGAGVLYFYFV), 44–64 (LRIATGALVGLAALPVVFTLL), 85–105 (IMAHVLAGALIVGTAISEVWL), and 114–134 (LFGIYGAAAAIAVLGFFGFYL). Positions 143–254 (PPPKPLKPKK…SGVQVAKVDE (112 aa)) are disordered. Over residues 148 to 163 (LKPKKPKQRRLRRKKT) the composition is skewed to basic residues. Over residues 169–191 (AEPEAAEEAENTELAAQEDEEAV) the composition is skewed to acidic residues. A compositionally biased stretch (low complexity) spans 192–220 (EAPPESIESPGGEPESATREAPAAETATA). A compositionally biased stretch (basic residues) spans 227–244 (LRNRRPTGKTSHRRRRTR).

As to quaternary structure, interacts with the Mce1 and Mce4 accessory subunits Rv0199/OmamA, Rv0177/Mam1C and Rv3492c/Mam4B.

Its subcellular location is the cell membrane. Required for the import of both fatty acids and cholesterol during growth in macrophages and in axenic culture. Facilitates the uptake of these lipids by stabilizing protein subunits of the Mce1 and Mce4 multi-subunit transporters, which transport fatty acids and cholesterol, respectively. Required for full virulence in vivo. This Mycobacterium tuberculosis (strain ATCC 25618 / H37Rv) protein is Lipid uptake coordinator A.